Consider the following 445-residue polypeptide: WD repeat domain phosphoinositide-interacting protein 2 (445 aa).

One copy of the WD 1 repeat lies at Ala182–Glu222. The L/FRRG motif motif lies at Phe223 to Gly226. WD repeat units follow at residues Lys228–Pro267 and Gly311–Cys349. Ser395 bears the Phosphoserine mark.

This sequence belongs to the WD repeat PROPPIN family. As to quaternary structure, interacts with TECPR1. Interacts with ATG16L1. Interacts with ATG5. Interacts with WIPI1. Interacts with WDR45. May interact with NUDC. Interacts with ULK1 and RB1CC1.

It localises to the preautophagosomal structure membrane. Its function is as follows. Component of the autophagy machinery that controls the major intracellular degradation process by which cytoplasmic materials are packaged into autophagosomes and delivered to lysosomes for degradation. Involved in an early step of the formation of preautophagosomal structures. Binds and is activated by phosphatidylinositol 3-phosphate (PtdIns3P) forming on membranes of the endoplasmic reticulum upon activation of the upstream ULK1 and PI3 kinases. Mediates ER-isolation membranes contacts by interacting with the ULK1:RB1CC1 complex and PtdIns3P. Once activated, WIPI2 recruits at phagophore assembly sites the ATG12-ATG5-ATG16L1 complex that directly controls the elongation of the nascent autophagosomal membrane. The chain is WD repeat domain phosphoinositide-interacting protein 2 from Mus musculus (Mouse).